The sequence spans 191 residues: Ribonuclease HII (191 aa).

In terms of domain architecture, RNase H type-2 spans 7–191 (ILMAGVDEVG…YSPVADLISK (185 aa)). The a divalent metal cation site is built by Asp13, Glu14, and Asp103.

The protein belongs to the RNase HII family. Mn(2+) is required as a cofactor. It depends on Mg(2+) as a cofactor.

The protein localises to the cytoplasm. It carries out the reaction Endonucleolytic cleavage to 5'-phosphomonoester.. Endonuclease that specifically degrades the RNA of RNA-DNA hybrids. This Legionella pneumophila (strain Paris) protein is Ribonuclease HII.